A 71-amino-acid chain; its full sequence is ATP synthase subunit c (71 aa).

Transmembrane regions (helical) follow at residues 5–25 (GAAI…AIIV) and 47–67 (FIGV…GFLI).

It belongs to the ATPase C chain family. As to quaternary structure, F-type ATPases have 2 components, F(1) - the catalytic core - and F(0) - the membrane proton channel. F(1) has five subunits: alpha(3), beta(3), gamma(1), delta(1), epsilon(1). F(0) has three main subunits: a(1), b(2) and c(10-14). The alpha and beta chains form an alternating ring which encloses part of the gamma chain. F(1) is attached to F(0) by a central stalk formed by the gamma and epsilon chains, while a peripheral stalk is formed by the delta and b chains.

The protein resides in the cell membrane. Its function is as follows. F(1)F(0) ATP synthase produces ATP from ADP in the presence of a proton or sodium gradient. F-type ATPases consist of two structural domains, F(1) containing the extramembraneous catalytic core and F(0) containing the membrane proton channel, linked together by a central stalk and a peripheral stalk. During catalysis, ATP synthesis in the catalytic domain of F(1) is coupled via a rotary mechanism of the central stalk subunits to proton translocation. In terms of biological role, key component of the F(0) channel; it plays a direct role in translocation across the membrane. A homomeric c-ring of between 10-14 subunits forms the central stalk rotor element with the F(1) delta and epsilon subunits. The chain is ATP synthase subunit c from Alkalihalobacillus alcalophilus (Bacillus alcalophilus).